The following is a 256-amino-acid chain: Enolase-phosphatase E1 (256 aa).

Positions 14 and 16 each coordinate Mg(2+). Residues 142-143 and lysine 176 each bind substrate; that span reads SS. A Mg(2+)-binding site is contributed by aspartate 201.

Belongs to the HAD-like hydrolase superfamily. MasA/MtnC family. In terms of assembly, monomer. It depends on Mg(2+) as a cofactor.

It localises to the cytoplasm. The protein localises to the nucleus. It carries out the reaction 5-methylsulfanyl-2,3-dioxopentyl phosphate + H2O = 1,2-dihydroxy-5-(methylsulfanyl)pent-1-en-3-one + phosphate. Its pathway is amino-acid biosynthesis; L-methionine biosynthesis via salvage pathway; L-methionine from S-methyl-5-thio-alpha-D-ribose 1-phosphate: step 3/6. It participates in amino-acid biosynthesis; L-methionine biosynthesis via salvage pathway; L-methionine from S-methyl-5-thio-alpha-D-ribose 1-phosphate: step 4/6. Functionally, bifunctional enzyme that catalyzes the enolization of 2,3-diketo-5-methylthiopentyl-1-phosphate (DK-MTP-1-P) into the intermediate 2-hydroxy-3-keto-5-methylthiopentenyl-1-phosphate (HK-MTPenyl-1-P), which is then dephosphorylated to form the acireductone 1,2-dihydroxy-3-keto-5-methylthiopentene (DHK-MTPene). This Drosophila melanogaster (Fruit fly) protein is Enolase-phosphatase E1.